Consider the following 256-residue polypeptide: Small ribosomal subunit protein uS2 (256 aa).

Belongs to the universal ribosomal protein uS2 family.

This is Small ribosomal subunit protein uS2 from Acidiphilium cryptum (strain JF-5).